A 310-amino-acid chain; its full sequence is Ribose-phosphate pyrophosphokinase (310 aa).

Residues 34-36 (DQE) and 93-94 (RQ) contribute to the ATP site. Positions 127 and 167 each coordinate Mg(2+). K190 is a catalytic residue. Residues R192, D216, and 220-224 (DSGGT) each bind D-ribose 5-phosphate.

Belongs to the ribose-phosphate pyrophosphokinase family. Class I subfamily. In terms of assembly, homohexamer. Mg(2+) is required as a cofactor.

It localises to the cytoplasm. The enzyme catalyses D-ribose 5-phosphate + ATP = 5-phospho-alpha-D-ribose 1-diphosphate + AMP + H(+). It participates in metabolic intermediate biosynthesis; 5-phospho-alpha-D-ribose 1-diphosphate biosynthesis; 5-phospho-alpha-D-ribose 1-diphosphate from D-ribose 5-phosphate (route I): step 1/1. In terms of biological role, involved in the biosynthesis of the central metabolite phospho-alpha-D-ribosyl-1-pyrophosphate (PRPP) via the transfer of pyrophosphoryl group from ATP to 1-hydroxyl of ribose-5-phosphate (Rib-5-P). This chain is Ribose-phosphate pyrophosphokinase, found in Agrobacterium fabrum (strain C58 / ATCC 33970) (Agrobacterium tumefaciens (strain C58)).